Consider the following 937-residue polypeptide: MYFDAGESEDFCIQYSVLQDIGVTVSGNQDECANLDDELNLRTRFDFYSKRMDIFVSPKFVPRKKNGLAPIKLWDEGENALFTSYNFSEDYYHFKGDARDSYSQYANIQPRLNIGPWRIRTQAIWNKNNNTKGEWSNNYLYAERGLGNIKSRLYIGDGYFPLKNFNSFKFKGGVLKTDENMYPYSEKTYSPIVKGSAKTQAKVEFFQDGVKIYSSIVPPGDFSISDYILSGSNSDLYVKVIEENGSIQEFIVPFTYPAVAVREGFTYYEIAMGETQQSNDYFTQLSFTRGLPYDFTVLTSLEYSGFYRSLEIGLGKMLGNLGALSLIYGQSNFSKSDNSKNKKWDIRYNKNIPDLNTYLSFSAVSQTRGGYSSLRDALDYEIGEYTFNSKNSYTASINHSLGELGSLNFSGTWRNYWENKNQTRSYNLSYSTQIFNGKAYLSGSLIRSELMNFNNKISDTILNIGVNIPFGLSRGIQSVSYNTSSVKGGRSTHQLGISGSEFDNKLYWHVNQGYSDNYSNTSMYGYYKAKYAQVNAGYSVSERYNHAYGGIEGGILVYDGGIILGRNLGDTMSIIEAPGAENTKIRGWGSIETDWRGRAFIGYLSPYQNNDISLDPSSLPLDSSLDITTNSVIPTTGAIVKTTYNVKKGKKVMLTLKKSNGDAVPFGAIVTVMDGDQNTSIVGDNGQLYLGSSMDTGRLKVIWGNGEDKKCVVDYIVGDNKNIAGIYIGSAEHVFSSMLLYGKKISFLSASVWXVIGVVKAFLTTLQSNNEWRTHSEKNDFSIDFDVGVGRSFAAVGPTKDMSLGANLTSEPTLAIDFTPIENIYVGANYGKDIGTLVFTTNDLTDITLMSSRSVVDGRQTGFFTFMDSSATYKISTKLGSSNDVNIQEITQGAKITPVSGEKTLPKKFTLKLHAHRSSSTVPDTYTVGLNVTSNVI.

This sequence belongs to the fimbrial export usher family. Post-translationally, a 97 kDa form of the protein is thought to be due to post-translational processing of isoform 104 kDa.

It localises to the cell outer membrane. Functionally, these proteins are essential for the biogenesis of mature CS3 pili, but not for synthesis of the CS3 pilin subunit. The sequence is that of Outer membrane usher protein CS3-2 from Escherichia coli.